A 133-amino-acid chain; its full sequence is Acyl-CoA thioesterase YbgC (133 aa).

The active site involves aspartate 11.

Belongs to the 4-hydroxybenzoyl-CoA thioesterase family. In terms of assembly, homotetramer. May interact with CagA.

Functionally, thioesterase that may be involved in phospholipid metabolism. Displays acyl-CoA thioesterase activity with lauroyl-CoA (C12:0), myristoyl-CoA (C14:0), palmitoyl-CoA (C16:0), stearoyl-CoA (C18:0) and benzoyl-CoA, catalyzing the hydrolysis of the thioester bond. Has low activity with butyryl-CoA and octanoyl-CoA. In Helicobacter pylori (strain ATCC 700392 / 26695) (Campylobacter pylori), this protein is Acyl-CoA thioesterase YbgC (ybgC).